Here is a 1351-residue protein sequence, read N- to C-terminus: Serine-rich adhesin for platelets (1351 aa).

An N-terminal signal peptide occupies residues 1-89 (MSKRQKEFHD…VNMLHDQQAF (89 aa)). A serine-rich repeat region 1, SRR1 region spans residues 90 to 230 (AASDAPLTSE…KTSTTSTSTA (141 aa)). The segment covering 100-111 (LNTQSETVGNQN) has biased composition (polar residues). Disordered regions lie at residues 100–228 (LNTQ…TSTS) and 751–1323 (NSMS…GLLG). 2 stretches are compositionally biased toward low complexity: residues 112 to 133 (STTI…NSSS) and 149 to 228 (NVTS…TSTS). Positions 231-751 (PIKLRTFSRL…TTFKYEVTRN (521 aa)) are non-repeat region (NRR). Residues 752–1294 (SMSDSVSTSG…SQSTLSATSE (543 aa)) are compositionally biased toward low complexity. The tract at residues 752–1312 (SMSDSVSTSG…AQSEKRLPDT (561 aa)) is serine-rich repeat region 1, SRR1. The short motif at 1309–1313 (LPDTG) is the LPXTG sorting signal element. The residue at position 1312 (Thr1312) is a Pentaglycyl murein peptidoglycan amidated threonine. Positions 1313 to 1351 (GDSIKQNGLLGGVMTLLVGLGLMKRKKKKDENDQDDSQA) are cleaved as a propeptide — removed by sortase.

The protein belongs to the serine-rich repeat protein (SRRP) family. In terms of processing, proteolytically cleaved by a metalloprotease. Glycosylated. It is probable that most of the Ser residues in SSR1 and SSR2 are O-GlcNAcylated. Sequential glycosylation by sugar transferases are able to generate complex sugar polymorphisms.

The protein resides in the secreted. It localises to the cell wall. Mediates binding to human platelets, possibly through a receptor-ligand interaction. Probably associated with virulence in endovascular infection. This Staphylococcus aureus (strain MRSA252) protein is Serine-rich adhesin for platelets (sasA).